The primary structure comprises 259 residues: Thiazole synthase (259 aa).

Residue Lys-95 is the Schiff-base intermediate with DXP of the active site. 1-deoxy-D-xylulose 5-phosphate is bound by residues Gly-156, 182–183 (AG), and 204–205 (AS).

Belongs to the ThiG family. Homotetramer. Forms heterodimers with either ThiH or ThiS.

It is found in the cytoplasm. It catalyses the reaction [ThiS sulfur-carrier protein]-C-terminal-Gly-aminoethanethioate + 2-iminoacetate + 1-deoxy-D-xylulose 5-phosphate = [ThiS sulfur-carrier protein]-C-terminal Gly-Gly + 2-[(2R,5Z)-2-carboxy-4-methylthiazol-5(2H)-ylidene]ethyl phosphate + 2 H2O + H(+). Its pathway is cofactor biosynthesis; thiamine diphosphate biosynthesis. In terms of biological role, catalyzes the rearrangement of 1-deoxy-D-xylulose 5-phosphate (DXP) to produce the thiazole phosphate moiety of thiamine. Sulfur is provided by the thiocarboxylate moiety of the carrier protein ThiS. In vitro, sulfur can be provided by H(2)S. The chain is Thiazole synthase from Corynebacterium aurimucosum (strain ATCC 700975 / DSM 44827 / CIP 107346 / CN-1) (Corynebacterium nigricans).